Reading from the N-terminus, the 2907-residue chain is Fibrillin-2 (2907 aa).

Residues 1 to 28 (MGRRRRLCLQPYFVWLGCVALWAQGTDG) form the signal peptide. Residues 26-58 (TDGQPQPPPPKTLRPQPPPQQVRPAVAGSEGGF) are disordered. The propeptide occupies 29–77 (QPQPPPPKTLRPQPPPQQVRPAVAGSEGGFMGPEYRDEGAVAASRVRRR). A compositionally biased stretch (pro residues) spans 30–46 (PQPPPPKTLRPQPPPQQ). EGF-like domains lie at 111–142 (IVPICRNSCGDGFCSRPNMCTCSSGQISPTCG), 145–176 (SIQQCSVRCMNGGTCADDHCQCQKGYIGTYCG), and 176–208 (GQPVCENGCQNGGRCIGPNRCACVYGFTGPQCE). 9 disulfides stabilise this stretch: C115–C124, C119–C130, C132–C141, C149–C159, C153–C164, C166–C175, C180–C190, C184–C196, and C198–C207. Residues 149–359 (CSVRCMNGGT…VTSTDGSRCI (211 aa)) form an interaction with MFAP4 region. Residues 214–266 (GPCFTQVNNQMCQGQLTGIVCTKTLCCATIGRAWGHPCEMCPAQPQPCRRGFI) enclose the TB 1 domain. The region spanning 276–317 (DVDECQAIPGLCQGGNCINTVGSFECRCPAGHKQSETTQKCE) is the EGF-like 4; calcium-binding domain. 6 disulfides stabilise this stretch: C280–C292, C287–C301, C303–C316, C322–C334, C329–C343, and C345–C358. The O-linked (Glc) serine glycan is linked to S298. The EGF-like 5; calcium-binding domain maps to 318-359 (DIDECSVIPGVCETGDCSNTVGSYFCLCPRGFVTSTDGSRCI). S340 is a glycosylation site (O-linked (Glc) serine). A TB 2 domain is found at 364–417 (GTCFSGLVNGRCAQELPGRMAKAQCCCEPGRCWSIGTIPEACPVRGSEEYRRLC). N-linked (GlcNAc...) asparagine glycosylation occurs at N485. Positions 487–527 (TIDICKHHANLCLNGRCIPTVSSYRCECNMGYKQDANGDCI) constitute an EGF-like 6 domain. 15 disulfides stabilise this stretch: C491–C503, C498–C512, C514–C526, C532–C542, C537–C551, C553–C566, C572–C584, C579–C593, C595–C608, C614–C625, C620–C634, C636–C649, C655–C666, C661–C675, and C677–C690. S509 carries O-linked (Glc) serine glycosylation. The EGF-like 7; calcium-binding domain maps to 528–567 (DVDECTSNPCSNGDCVNTPGSYYCKCHAGFQRTPTKQACI). A glycan (O-linked (Glc) serine) is linked at S548. The region spanning 568-609 (DIDECIQNGVLCKNGRCVNTDGSFQCICNAGFELTTDGKNCV) is the EGF-like 8; calcium-binding domain. S590 is a glycosylation site (O-linked (Glc) serine). Positions 610–650 (DHDECTTTNMCLNGMCINEDGSFKCVCKPGFILAPNGRYCT) constitute an EGF-like 9; calcium-binding domain. S631 carries an O-linked (Glc) serine glycan. The 41-residue stretch at 651-691 (DVDECQTPGICMNGHCINNEGSFRCDCPPGLAVGVDGRVCV) folds into the EGF-like 10; calcium-binding domain. S672 is a glycosylation site (O-linked (Glc) serine). The TB 3 domain maps to 697-749 (STCYGEIKKGVCVRPFPGAVTKSECCCANPDYGFGEPCQPCPAKNSAEFHGLC). Residues 761 to 802 (DINECALDPDICANGICENLRGSYRCNCNSGYEPDASGRNCI) enclose the EGF-like 11; calcium-binding domain. 9 cysteine pairs are disulfide-bonded: C765-C777, C772-C786, C788-C801, C807-C819, C814-C828, C830-C843, C849-C859, C854-C868, and C870-C883. Positions 803–844 (DIDECLVNRLLCDNGLCRNTPGSYSCTCPPGYVFRTETETCE) constitute an EGF-like 12; calcium-binding domain. O-linked (Glc) serine glycosylation is present at S825. One can recognise an EGF-like 13; calcium-binding domain in the interval 845–883 (DVNECESNPCVNGACRNNLGSFHCECSPGSKLSSTGLIC). A glycan (O-linked (Glc) serine) is linked at S865. Residues 889–940 (GTCWLNIQDNRCEVNINGATLKSECCATLGAAWGSPCERCELDAACPRGFAR) enclose the TB 4 domain. The region spanning 948–989 (DVNECEVFPGVCPNGRCVNSKGSFHCECPEGLTLDGTGRVCL) is the EGF-like 14; calcium-binding domain. 3 disulfide bridges follow: C952-C964, C959-C973, and C975-C988. An O-linked (Glc) serine glycan is attached at S970. A TB 5 domain is found at 994–1045 (EHCFLKWDEDECIHPVPGKFRMDACCCAVGAAWGTECEECPKPGTKEYETLC). The EGF-like 15; calcium-binding domain maps to 1066–1107 (DINECKAFPGMCTYGKCRNTIGSFKCRCNNGFALDMEERNCT). 36 disulfide bridges follow: C1070-C1082, C1077-C1091, C1093-C1106, C1112-C1124, C1119-C1133, C1135-C1149, C1155-C1167, C1162-C1176, C1178-C1191, C1197-C1209, C1204-C1218, C1220-C1233, C1239-C1250, C1246-C1259, C1261-C1274, C1280-C1292, C1287-C1301, C1303-C1316, C1322-C1334, C1329-C1343, C1345-C1358, C1364-C1377, C1371-C1386, C1388-C1399, C1405-C1418, C1412-C1427, C1429-C1440, C1446-C1458, C1453-C1467, C1469-C1482, C1488-C1499, C1494-C1508, C1510-C1523, C1529-C1540, C1535-C1549, and C1551-C1564. O-linked (Glc) serine glycosylation occurs at S1088. N1105 carries N-linked (GlcNAc...) asparagine glycosylation. In terms of domain architecture, EGF-like 16; calcium-binding spans 1108–1150 (DIDECRISPDLCGSGICVNTPGSFECECFEGYESGFMMMKNCM). In terms of domain architecture, EGF-like 17; calcium-binding spans 1151–1192 (DIDECERNPLLCRGGTCVNTEGSFQCDCPLGHELSPSREDCV). The O-linked (Glc) serine glycan is linked to S1173. One can recognise an EGF-like 18; calcium-binding domain in the interval 1193 to 1234 (DINECSLSDNLCRNGKCVNMIGTYQCSCNPGYQATPDRQGCT). O-linked (Glc) threonine glycosylation occurs at T1215. Residues 1235-1275 (DIDECMIMNGGCDTQCTNSEGSYECSCSEGYALMPDGRSCA) enclose the EGF-like 19; calcium-binding domain. O-linked (Glc) serine glycosylation is present at S1256. One can recognise an EGF-like 20; calcium-binding domain in the interval 1276-1317 (DIDECENNPDICDGGQCTNIPGEYRCLCYDGFMASMDMKTCI). Residues 1318-1359 (DVNECDLNPNICMFGECENTKGSFICHCQLGYSVKKGTTGCT) form the EGF-like 21; calcium-binding domain. Residue S1340 is glycosylated (O-linked (Glc) serine). Residues 1360–1400 (DVDECEIGAHNCDMHASCLNVPGSFKCSCREGWVGNGIKCI) enclose the EGF-like 22; calcium-binding domain. The O-linked (Glc) serine glycan is linked to S1383. One can recognise an EGF-like 23; calcium-binding domain in the interval 1401-1441 (DLDECANGTHQCSINAQCVNTPGSYRCACSEGFTGDGFTCS). An N-linked (GlcNAc...) asparagine glycan is attached at N1407. The EGF-like 24; calcium-binding domain occupies 1442–1483 (DVDECAENTNLCENGQCLNVPGAYRCECEMGFTPASDSRSCQ). In terms of domain architecture, EGF-like 25; calcium-binding spans 1484–1524 (DIDECSFQNICVFGTCNNLPGMFHCICDDGYELDRTGGNCT). The N-linked (GlcNAc...) asparagine glycan is linked to N1522. Residues 1525–1565 (DIDECADPINCVNGLCVNTPGRYECNCPPDFQLNPTGVGCV) enclose the EGF-like 26; calcium-binding domain. In terms of domain architecture, TB 6 spans 1570 to 1626 (GNCYLKFGPRGDGSLSCNTEVGVGVSRSSCCCSLGKAWGNPCETCPPVNSTEYYTLC). Residue N1618 is glycosylated (N-linked (GlcNAc...) asparagine). The EGF-like 27; calcium-binding domain maps to 1643–1684 (DIDECQELPGLCQGGNCINTFGSFQCECPQGYYLSEETRICE). 6 cysteine pairs are disulfide-bonded: C1647/C1659, C1654/C1668, C1670/C1683, C1689/C1701, C1696/C1710, and C1712/C1725. S1665 is a glycosylation site (O-linked (Glc) serine). The EGF-like 28; calcium-binding domain maps to 1685–1726 (DIDECFAHPGVCGPGTCYNTLGNYTCICPPEYMQVNGGHNCM). An N-linked (GlcNAc...) asparagine glycan is attached at N1707. The interaction with MFAP4 stretch occupies residues 1728 to 2164 (MRKSFCYRSY…VPSLHDTRED (437 aa)). Residues 1731 to 1784 (SFCYRSYNGTTCENELPFNVTKRMCCCTYNVGKAWNKPCEPCPTPGTADFKTIC) enclose the TB 7 domain. Residues N1738 and N1749 are each glycosylated (N-linked (GlcNAc...) asparagine). The EGF-like 29; calcium-binding domain occupies 1801–1842 (DIDECKEIPGICANGVCINQIGSFRCECPTGFSYNDLLLVCE). Cystine bridges form between C1805-C1817, C1812-C1826, C1828-C1841, C1847-C1860, C1854-C1869, C1871-C1883, C1889-C1901, C1896-C1910, C1912-C1925, C1931-C1941, C1936-C1950, C1952-C1964, C1970-C1983, C1978-C1992, C1994-C2007, C2013-C2025, C2020-C2034, C2036-C2047, C2053-C2065, C2060-C2074, and C2076-C2089. Residues 1843-1884 (DIDECSNGDNLCQRNADCINSPGSYRCECAAGFKLSPNGACV) form the EGF-like 30; calcium-binding domain. An O-linked (Glc) serine glycan is attached at S1866. The EGF-like 31; calcium-binding domain occupies 1885-1926 (DRNECLEIPNVCSHGLCVDLQGSYQCICNNGFKASQDQTMCM). The EGF-like 32; calcium-binding domain maps to 1927-1965 (DVDECERHPCGNGTCKNTVGSYNCLCYPGFELTHNNDCL). An N-linked (GlcNAc...) asparagine glycan is attached at N1938. The O-linked (Glc) serine glycan is linked to S1947. In terms of domain architecture, EGF-like 33; calcium-binding spans 1966 to 2008 (DIDECSSFFGQVCRNGRCFNEIGSFKCLCNEGYELTPDGKNCI). S1989 carries O-linked (Glc) serine glycosylation. An EGF-like 34; calcium-binding domain is found at 2009 to 2048 (DTNECVALPGSCSPGTCQNLEGSFRCICPPGYEVRSENCI). The EGF-like 35; calcium-binding domain occupies 2049-2090 (DINECDEDPNICLFGSCTNTPGGFQCICPPGFVLSDNGRRCF). The TB 8 domain occupies 2095 to 2148 (SFCFTNFENGKCSVPKAFNTTKAKCCCSKMPGEGWGDPCELCPKDDEVAFQDLC). N-linked (GlcNAc...) asparagine glycosylation is present at N2113. An EGF-like 36; calcium-binding domain is found at 2164–2205 (DVNECLESPGICSNGQCINTDGSFRCECPMGYNLDYTGVRCV). Disulfide bonds link C2168–C2180, C2175–C2189, C2191–C2204, C2210–C2221, C2216–C2230, C2232–C2244, C2250–C2261, C2257–C2270, C2272–C2285, C2291–C2305, C2298–C2314, C2316–C2329, C2335–C2347, C2342–C2356, and C2358–C2371. A glycan (O-linked (Glc) serine) is linked at S2186. Residues 2206–2245 (DTDECSIGNPCGNGTCTNVIGSFECTCNEGFEPGPMMNCE) form the EGF-like 37; calcium-binding domain. An N-linked (GlcNAc...) asparagine glycan is attached at N2218. Positions 2246–2286 (DINECAQNPLLCAFRCMNTFGSYECTCPVGYALREDQKMCK) constitute an EGF-like 38; calcium-binding domain. Residue S2267 is glycosylated (O-linked (Glc) serine). The EGF-like 39; calcium-binding domain occupies 2287 to 2330 (DLDECAEGLHDCESRGMMCKNLIGTFMCICPPGMARRPDGEGCV). The region spanning 2331-2372 (DENECRTKPGICENGRCVNIIGSYRCECNEGFQSSSSGTECL) is the EGF-like 40; calcium-binding domain. O-linked (Glc) serine glycosylation is present at S2353. In terms of domain architecture, TB 9 spans 2377 to 2430 (GLCFAEVLQTMCQMASSSRNLVTKSECCCDGGRGWGHQCELCPLPGTAQYKKIC). Residues 2442–2483 (DIDECKVMPSLCTNGQCVNTMGSFRCFCKVGYTTDISGTACV) enclose the EGF-like 41; calcium-binding domain. Disulfide bonds link C2446–C2458, C2453–C2467, C2469–C2482, C2488–C2499, C2495–C2508, C2510–C2523, C2529–C2540, C2536–C2549, C2551–C2562, C2568–C2581, C2575–C2590, C2592–C2605, C2611–C2621, C2617–C2630, C2632–C2645, C2651–C2662, C2657–C2671, C2673–C2686, C2692–C2703, C2699–C2712, and C2714–C2726. S2464 carries an O-linked (Glc) serine glycan. Residues 2484–2524 (DLDECSQSPKPCNFICKNTKGSYQCSCPRGYVLQEDGKTCK) form the EGF-like 42; calcium-binding domain. S2505 carries an O-linked (Glc) serine glycan. An EGF-like 43; calcium-binding domain is found at 2525–2563 (DLDECQTKQHNCQFLCVNTLGGFTCKCPPGFTQHHTACI). In terms of domain architecture, EGF-like 44; calcium-binding spans 2564–2606 (DNNECGSQPSLCGAKGICQNTPGSFSCECQRGFSLDASGLNCE). O-linked (Glc) serine glycosylation is present at S2587. Residues 2607 to 2646 (DVDECDGNHRCQHGCQNILGGYRCGCPQGYVQHYQWNQCV) form the EGF-like 45; calcium-binding domain. The 41-residue stretch at 2647-2687 (DENECSNPGACGSASCYNTLGSYKCACPSGFSFDQFSSACH) folds into the EGF-like 46; calcium-binding domain. A glycan (O-linked (Glc) serine) is linked at S2668. The EGF-like 47; calcium-binding domain occupies 2688-2727 (DVNECSSSKNPCSYGCSNTEGGYLCGCPPGYFRVGQGHCV). An N-linked (GlcNAc...) asparagine glycan is attached at N2803.

It belongs to the fibrillin family. Interacts with BMP2, BMP4, BMP7, BMP10 and GDF5. Interacts with MFAP2 and MFAP5. Interacts with ADAMTSL5. Interacts with MFAP4. N-glycosylated. In terms of processing, O-glycosylated on serine residues by POGLUT2 and POGLUT3. As to expression, widely expressed.

It is found in the secreted. Its subcellular location is the extracellular space. It localises to the extracellular matrix. Functionally, fibrillins are structural components of 10-12 nm extracellular calcium-binding microfibrils, which occur either in association with elastin or in elastin-free bundles. Fibrillin-2-containing microfibrils regulate the early process of elastic fiber assembly. Regulates osteoblast maturation by controlling TGF-beta bioavailability and calibrating TGF-beta and BMP levels, respectively. In terms of biological role, hormone secreted by trophoblasts that promotes trophoblast invasiveness. Has glucogenic activity: is able to increase plasma glucose levels. The chain is Fibrillin-2 from Mus musculus (Mouse).